The sequence spans 137 residues: Large ribosomal subunit protein uL16 (137 aa).

Belongs to the universal ribosomal protein uL16 family. In terms of assembly, part of the 50S ribosomal subunit.

Binds 23S rRNA and is also seen to make contacts with the A and possibly P site tRNAs. The chain is Large ribosomal subunit protein uL16 from Mesoplasma florum (strain ATCC 33453 / NBRC 100688 / NCTC 11704 / L1) (Acholeplasma florum).